The primary structure comprises 62 residues: Defensin BmKDfsin4 (62 aa).

Positions 1–24 are cleaved as a signal peptide; sequence MKTIVLLFVLALVFCTLEMGIVEA. Disulfide bonds link cysteine 28–cysteine 49, cysteine 35–cysteine 57, and cysteine 39–cysteine 59.

This sequence belongs to the invertebrate defensin family. Type 2 subfamily.

The protein resides in the secreted. Its function is as follows. Dual-function peptide with antimicrobial and potassium channel-blocking activities. Shows inhibitory activity against Gram-positive bacteria such as S.aureus, B.subtilis, and M.luteus as well as methicillin-resistant S.aureus (MIC=0.1-20 uM). Does not act on bacteria by disrupting membranes. Also moderately inhibits Kv1.1/KCNA1 (25.2% inhibition at 1 uM), Kv1.2/KCNA2 (30.5% inhibition at 1 uM), and Kv1.3/KCNA3 potassium channels (IC(50)=510.2 nM, 61% inhibition at 1 uM). Inhibits potassium channels by interacting with the pore region. Does not show hemolytic activity. In vitro, dose-dependently decreases the production of Hepatitis B virus (HBV) DNA and HBV viral proteins in both culture medium and cell lysate. The chain is Defensin BmKDfsin4 from Olivierus martensii (Manchurian scorpion).